The primary structure comprises 127 residues: Mitochondrial pyruvate carrier 2 (127 aa).

Residues 2–40 (SAAGARGLRATYHRLLDKVELMLPEKLRPLYNHPAGPRT) are Mitochondrial matrix-facing. A helical transmembrane segment spans residues 41-61 (VFFWAPIMKRGLVCAGLADMA). Residues 62–72 (RPAEKLSTAQS) lie on the Mitochondrial intermembrane side of the membrane. Residues 73 to 90 (AVLMATGFIWSRYSLVII) form a helical membrane-spanning segment. Topologically, residues 91–95 (PKNWS) are mitochondrial matrix. The helical transmembrane segment at 96–115 (LFAVNFFVGAAGASQLFRIW) threads the bilayer. Residues 116–127 (RYNQELKAKAHK) are Mitochondrial intermembrane-facing.

It belongs to the mitochondrial pyruvate carrier (MPC) (TC 2.A.105) family. As to quaternary structure, homodimer. Homooligomer. Forms heterodimers with MPC1 and MPC1L. The heterodimer is the more stable and dominant form.

It is found in the mitochondrion inner membrane. The enzyme catalyses pyruvate(out) + H(+)(out) = pyruvate(in) + H(+)(in). In terms of biological role, mediates the uptake of pyruvate into mitochondria. This is Mitochondrial pyruvate carrier 2 (MPC2) from Pongo abelii (Sumatran orangutan).